Consider the following 313-residue polypeptide: tRNA(Ile)-lysidine synthase (313 aa).

37-42 (SGGPDS) lines the ATP pocket.

Belongs to the tRNA(Ile)-lysidine synthase family.

It localises to the cytoplasm. It catalyses the reaction cytidine(34) in tRNA(Ile2) + L-lysine + ATP = lysidine(34) in tRNA(Ile2) + AMP + diphosphate + H(+). In terms of biological role, ligates lysine onto the cytidine present at position 34 of the AUA codon-specific tRNA(Ile) that contains the anticodon CAU, in an ATP-dependent manner. Cytidine is converted to lysidine, thus changing the amino acid specificity of the tRNA from methionine to isoleucine. In Corynebacterium efficiens (strain DSM 44549 / YS-314 / AJ 12310 / JCM 11189 / NBRC 100395), this protein is tRNA(Ile)-lysidine synthase.